The sequence spans 136 residues: Small ribosomal subunit protein uS9 (136 aa).

It belongs to the universal ribosomal protein uS9 family.

The polypeptide is Small ribosomal subunit protein uS9 (Borrelia garinii subsp. bavariensis (strain ATCC BAA-2496 / DSM 23469 / PBi) (Borreliella bavariensis)).